We begin with the raw amino-acid sequence, 493 residues long: Hexokinase-like 1 protein (493 aa).

A Hexokinase domain is found at 38-488 (ASTCPILTKF…SGLGAALLAA (451 aa)). The interval 93 to 232 (SGNEEGLFYA…GLDMRVSALV (140 aa)) is hexokinase small subdomain. ADP contacts are provided by G107, T108, and N109. D-glucose contacts are provided by T198, K199, N233, and D234. Residues 233-477 (NDGVGTLAGA…SHVAIKHTKD (245 aa)) form a hexokinase large subdomain region. Position 257 (T257) interacts with ADP. D-glucose is bound by residues N260, E287, and E317. Position 442 (A442) interacts with ADP.

The protein belongs to the hexokinase family.

It carries out the reaction a D-hexose + ATP = a D-hexose 6-phosphate + ADP + H(+). The catalysed reaction is D-fructose + ATP = D-fructose 6-phosphate + ADP + H(+). It catalyses the reaction D-glucose + ATP = D-glucose 6-phosphate + ADP + H(+). Its pathway is carbohydrate metabolism; hexose metabolism. It participates in carbohydrate degradation; glycolysis; D-glyceraldehyde 3-phosphate and glycerone phosphate from D-glucose: step 1/4. Its function is as follows. Fructose and glucose phosphorylating enzyme. This Arabidopsis thaliana (Mouse-ear cress) protein is Hexokinase-like 1 protein.